The chain runs to 225 residues: Uridylate kinase (225 aa).

9–10 (GS) serves as a coordination point for ATP. Gly-46 serves as a coordination point for UMP. Residues Gly-47 and Arg-51 each coordinate ATP. UMP-binding positions include Asp-67 and 115 to 121 (THPAHTT). Positions 141, 142, 147, and 150 each coordinate ATP.

This sequence belongs to the UMP kinase family. Homohexamer.

It localises to the cytoplasm. The catalysed reaction is UMP + ATP = UDP + ADP. The protein operates within pyrimidine metabolism; CTP biosynthesis via de novo pathway; UDP from UMP (UMPK route): step 1/1. Inhibited by UTP. In terms of biological role, catalyzes the reversible phosphorylation of UMP to UDP. The polypeptide is Uridylate kinase (Methanococcus vannielii (strain ATCC 35089 / DSM 1224 / JCM 13029 / OCM 148 / SB)).